A 142-amino-acid polypeptide reads, in one-letter code: uncharacterized protein (142 aa).

Helical transmembrane passes span leucine 3–leucine 23, serine 30–isoleucine 50, and phenylalanine 91–serine 111.

It localises to the membrane. This is an uncharacterized protein from Saccharomyces cerevisiae (strain ATCC 204508 / S288c) (Baker's yeast).